Consider the following 398-residue polypeptide: Phosphoglycerate kinase (398 aa).

Residues 21–23, R36, 59–62, R119, and R157 each bind substrate; these read DFN and HLGR. ATP is bound by residues K208, G296, E327, and 354-357; that span reads GGDS.

The protein belongs to the phosphoglycerate kinase family. In terms of assembly, monomer.

Its subcellular location is the cytoplasm. The enzyme catalyses (2R)-3-phosphoglycerate + ATP = (2R)-3-phospho-glyceroyl phosphate + ADP. Its pathway is carbohydrate degradation; glycolysis; pyruvate from D-glyceraldehyde 3-phosphate: step 2/5. This chain is Phosphoglycerate kinase, found in Streptococcus agalactiae serotype Ia (strain ATCC 27591 / A909 / CDC SS700).